A 526-amino-acid chain; its full sequence is Ubiquitin carboxyl-terminal hydrolase 17-like protein A (526 aa).

The tract at residues 1–21 (MVVALSFPEADPALSSPDAPE) is disordered. The USP domain maps to 51 to 348 (CGLQNTGNSC…NAYVLFYVQQ (298 aa)). Cys60 acts as the Nucleophile in catalysis. The active-site Proton acceptor is His307. The segment covering 374–385 (KKSRRKKHKKKS) has biased composition (basic residues). Disordered stretches follow at residues 374 to 394 (KKSRRKKHKKKSPFTEDLGEP) and 465 to 494 (RSTANWGRDSPDKENQPLHNADRLLTSQGP). Basic and acidic residues predominate over residues 473 to 486 (DSPDKENQPLHNAD).

Belongs to the peptidase C19 family. Polyubiquitinated; ubiquitination leads to its subsequent degradation. Expressed in hematopoietic progenitor cell lines Ba/F3 and FDCP1. Not detected in brain, lung, liver, kidney, thymus, spleen and bone marrow.

It carries out the reaction Thiol-dependent hydrolysis of ester, thioester, amide, peptide and isopeptide bonds formed by the C-terminal Gly of ubiquitin (a 76-residue protein attached to proteins as an intracellular targeting signal).. Its function is as follows. Deubiquitinating enzyme that removes conjugated ubiquitin from specific proteins to regulate different cellular processes. Has deubiquitinating enzyme activity for DNAH5, suggesting a role in the regulation of DNAH5 degradation by the ubiquitin-proteasome pathway. Has growth-suppressing activity; induces arrest in G1 phase upon controlled expression. In Mus musculus (Mouse), this protein is Ubiquitin carboxyl-terminal hydrolase 17-like protein A (Usp17la).